Reading from the N-terminus, the 64-residue chain is Conotoxin reg3.16 (64 aa).

The signal sequence occupies residues 1-19; the sequence is MSKLGVFLTICLLLFPLTA. Residues 20-49 constitute a propeptide that is removed on maturation; the sequence is LQLDGDQPADKPAQRKLKILPKRKHWTRFT. 3 disulfides stabilise this stretch: C50-C64, C51-C60, and C56-C63.

It belongs to the conotoxin M superfamily. Expressed by the venom duct.

The protein resides in the secreted. In Conus regius (Crown cone), this protein is Conotoxin reg3.16.